The sequence spans 460 residues: Putative glycoside/cation symporter YagG (460 aa).

At 1-9 the chain is on the cytoplasmic side; sequence MTQLTMKDK. Transmembrane regions (helical) follow at residues 10 to 30 and 31 to 51; these read IGYGLGDTACGFVWQATMFLL and AYFYTDVFGLSAGIMGTLFLV. Residues 52–78 are Cytoplasmic-facing; sequence SRVLDAVTDPLMGLLVDRTRTRHGQFR. Residues 79 to 99 traverse the membrane as a helical segment; it reads PFLLWGAIPFGIVCVLTFYTP. Residues 100–106 lie on the Periplasmic side of the membrane; the sequence is DFSAQGK. The chain crosses the membrane as a helical span at residues 107–127; the sequence is IIYACVTYILLTLVYTFVNVP. Topologically, residues 128 to 150 are cytoplasmic; that stretch reads YCAMPGVITADPKERHALQSWRF. A helical transmembrane segment spans residues 151 to 171; sequence FLAAAGSLAISGIALPLVSII. Over 172–179 the chain is Periplasmic; sequence GKGDEQVG. A helical transmembrane segment spans residues 180–200; that stretch reads YFGAMCVLGLSGVVLLYVCFF. At 201–262 the chain is on the cytoplasmic side; it reads TTKERYTFEV…FVKYVMDHPE (62 aa). Residues 263–283 traverse the membrane as a helical segment; the sequence is LATQFLLYGSLATMFGSLCSS. Residues 284 to 308 are Periplasmic-facing; it reads RLLGRFDRVTAFKWIIVAYSLISLL. Residues 309–329 form a helical membrane-spanning segment; the sequence is IFVTPAEHIALIFALNILFLF. Residues 330–366 lie on the Cytoplasmic side of the membrane; that stretch reads VFNTTTPLQWLMASDVVDYEESRSGRRLDGLVFSTYL. Residues 367–387 form a helical membrane-spanning segment; it reads FSLKIGLAIGGAVVGWILAYV. Topologically, residues 388–405 are periplasmic; the sequence is NYSASSSVQPVEVLTTIK. The helical transmembrane segment at 406–426 threads the bilayer; the sequence is ILFCVVPVVLYAGMFIMLSLY. Topologically, residues 427–460 are cytoplasmic; sequence KLTDARVEAISRQLIKHRAAQGEAVPDAATAASH.

Belongs to the sodium:galactoside symporter (TC 2.A.2) family.

It is found in the cell inner membrane. The polypeptide is Putative glycoside/cation symporter YagG (yagG) (Escherichia coli (strain K12)).